A 305-amino-acid chain; its full sequence is Porphobilinogen deaminase (305 aa).

S-(dipyrrolylmethanemethyl)cysteine is present on C239.

It belongs to the HMBS family. As to quaternary structure, monomer. It depends on dipyrromethane as a cofactor.

It carries out the reaction 4 porphobilinogen + H2O = hydroxymethylbilane + 4 NH4(+). It functions in the pathway porphyrin-containing compound metabolism; protoporphyrin-IX biosynthesis; coproporphyrinogen-III from 5-aminolevulinate: step 2/4. Its function is as follows. Tetrapolymerization of the monopyrrole PBG into the hydroxymethylbilane pre-uroporphyrinogen in several discrete steps. This is Porphobilinogen deaminase from Dichelobacter nodosus (strain VCS1703A).